A 365-amino-acid chain; its full sequence is tRNA N6-adenosine threonylcarbamoyltransferase (365 aa).

Histidine 119 and histidine 123 together coordinate Fe cation. Substrate contacts are provided by residues 141-145 (LVSGG), aspartate 174, glycine 187, and asparagine 288. Aspartate 316 serves as a coordination point for Fe cation.

The protein belongs to the KAE1 / TsaD family. Fe(2+) is required as a cofactor.

Its subcellular location is the cytoplasm. It carries out the reaction L-threonylcarbamoyladenylate + adenosine(37) in tRNA = N(6)-L-threonylcarbamoyladenosine(37) in tRNA + AMP + H(+). In terms of biological role, required for the formation of a threonylcarbamoyl group on adenosine at position 37 (t(6)A37) in tRNAs that read codons beginning with adenine. Is involved in the transfer of the threonylcarbamoyl moiety of threonylcarbamoyl-AMP (TC-AMP) to the N6 group of A37, together with TsaE and TsaB. TsaD likely plays a direct catalytic role in this reaction. The polypeptide is tRNA N6-adenosine threonylcarbamoyltransferase (Agrobacterium fabrum (strain C58 / ATCC 33970) (Agrobacterium tumefaciens (strain C58))).